A 531-amino-acid polypeptide reads, in one-letter code: Probable rhamnogalacturonate lyase A (531 aa).

An N-terminal signal peptide occupies residues 1 to 20 (MLSKTSLLSLLSLAAGVVNA). Cystine bridges form between Cys50–Cys93 and Cys184–Cys193.

It belongs to the polysaccharide lyase 4 family.

It localises to the secreted. The catalysed reaction is Endotype eliminative cleavage of L-alpha-rhamnopyranosyl-(1-&gt;4)-alpha-D-galactopyranosyluronic acid bonds of rhamnogalacturonan I domains in ramified hairy regions of pectin leaving L-rhamnopyranose at the reducing end and 4-deoxy-4,5-unsaturated D-galactopyranosyluronic acid at the non-reducing end.. In terms of biological role, pectinolytic enzymes consist of four classes of enzymes: pectin lyase, polygalacturonase, pectin methylesterase and rhamnogalacturonase. Degrades the rhamnogalacturonan I (RG-I) backbone of pectin. This chain is Probable rhamnogalacturonate lyase A (rglA), found in Aspergillus niger (strain ATCC MYA-4892 / CBS 513.88 / FGSC A1513).